The following is a 464-amino-acid chain: tRNA-2-methylthio-N(6)-dimethylallyladenosine synthase (464 aa).

A disordered region spans residues 1–25 (MSDLVPLSRKPAPAAGDPAPSPAAP). Residues 27–142 (RKVYVHTFGC…LPEMVERARG (116 aa)) form the MTTase N-terminal domain. 6 residues coordinate [4Fe-4S] cluster: Cys-36, Cys-72, Cys-105, Cys-180, Cys-184, and Cys-187. The Radical SAM core domain maps to 166-398 (ARGRATAFVT…LAAQRRIAGE (233 aa)). Positions 401 to 464 (AAELGKVVEV…GGSSLSGTLA (64 aa)) constitute a TRAM domain.

This sequence belongs to the methylthiotransferase family. MiaB subfamily. As to quaternary structure, monomer. It depends on [4Fe-4S] cluster as a cofactor.

It localises to the cytoplasm. It carries out the reaction N(6)-dimethylallyladenosine(37) in tRNA + (sulfur carrier)-SH + AH2 + 2 S-adenosyl-L-methionine = 2-methylsulfanyl-N(6)-dimethylallyladenosine(37) in tRNA + (sulfur carrier)-H + 5'-deoxyadenosine + L-methionine + A + S-adenosyl-L-homocysteine + 2 H(+). Its function is as follows. Catalyzes the methylthiolation of N6-(dimethylallyl)adenosine (i(6)A), leading to the formation of 2-methylthio-N6-(dimethylallyl)adenosine (ms(2)i(6)A) at position 37 in tRNAs that read codons beginning with uridine. In Anaeromyxobacter dehalogenans (strain 2CP-C), this protein is tRNA-2-methylthio-N(6)-dimethylallyladenosine synthase.